The chain runs to 252 residues: CD99 antigen-like protein 2 (252 aa).

The first 23 residues, 1-23 (MEKTLWTWTLLAVFSLLVVKGMS), serve as a signal peptide directing secretion. The interval 30 to 170 (DALGDDDDDE…DLDPADDNNY (141 aa)) is disordered. A compositionally biased stretch (low complexity) spans 57–68 (AAVKPTLKPVKP). A compositionally biased stretch (basic and acidic residues) spans 96-120 (NDIKGKGKDSGKGDKEVGGGSRDDG). A helical membrane pass occupies residues 178 to 198 (TIAGIVSAVAMALVGAVSSYI).

The protein belongs to the CD99 family.

It localises to the cell membrane. It is found in the cell junction. May function as a homophilic adhesion molecule. The chain is CD99 antigen-like protein 2 (cd99l2) from Danio rerio (Zebrafish).